The primary structure comprises 161 residues: V-type proton ATPase subunit c (161 aa).

The Lumenal portion of the chain corresponds to 1–9 (MSTDLCPVY). A helical membrane pass occupies residues 10 to 32 (APFFGVMGCTAAIVFASFGAAYG). Over 33–54 (TAKAGVGISAMGVLRPDLIVKN) the chain is Cytoplasmic. The chain crosses the membrane as a helical span at residues 55–75 (TIPVVMAGIIAIYGLVVSVLI). Residues 76 to 91 (SGNLKQILSLYSGFIQ) lie on the Lumenal side of the membrane. The helical transmembrane segment at 92–113 (LGAGLSVGLAGLAAGFAIGIVG) threads the bilayer. The Cytoplasmic segment spans residues 114–125 (DAGVRGTAQQPR). Residues 126–151 (LFVAMILILIFAEVLGLYGLIVALLL) form a helical membrane-spanning segment. Topologically, residues 152–161 (NTRATDNVTC) are lumenal.

This sequence belongs to the V-ATPase proteolipid subunit family. In terms of assembly, V-ATPase is a heteromultimeric enzyme composed of a peripheral catalytic V1 complex (components A to H) attached to an integral membrane V0 proton pore complex (components: a, c, c', c'', d, e, f and VOA1). The decameric c-ring forms the proton-conducting pore, and is composed of eight proteolipid subunits c, one subunit c' and one subunit c''.

It localises to the vacuole membrane. Functionally, proton-conducting pore forming subunit of the V0 complex of vacuolar(H+)-ATPase (V-ATPase), a multisubunit enzyme composed of a peripheral complex (V1) that hydrolyzes ATP and a membrane integral complex (V0) that translocates protons. V-ATPase is responsible for acidifying and maintaining the pH of intracellular compartments. The chain is V-type proton ATPase subunit c from Schizosaccharomyces pombe (strain 972 / ATCC 24843) (Fission yeast).